Reading from the N-terminus, the 316-residue chain is Transaldolase 2 (316 aa).

The active-site Schiff-base intermediate with substrate is Lys-131.

This sequence belongs to the transaldolase family. Type 1 subfamily. In terms of assembly, homodimer.

Its subcellular location is the cytoplasm. The enzyme catalyses D-sedoheptulose 7-phosphate + D-glyceraldehyde 3-phosphate = D-erythrose 4-phosphate + beta-D-fructose 6-phosphate. It participates in carbohydrate degradation; pentose phosphate pathway; D-glyceraldehyde 3-phosphate and beta-D-fructose 6-phosphate from D-ribose 5-phosphate and D-xylulose 5-phosphate (non-oxidative stage): step 2/3. Its function is as follows. Transaldolase is important for the balance of metabolites in the pentose-phosphate pathway. The protein is Transaldolase 2 of Salmonella paratyphi A (strain ATCC 9150 / SARB42).